The sequence spans 445 residues: Glycine--tRNA ligase (445 aa).

Substrate contacts are provided by R97 and E145. Residues 177-179, 187-192, 262-263, and 308-311 contribute to the ATP site; these read RNE, FRTCEF, EV, and GLTR. 192–196 lines the substrate pocket; the sequence is FEQME. Substrate is bound at residue 304–308; that stretch reads ETSAG.

It belongs to the class-II aminoacyl-tRNA synthetase family. As to quaternary structure, homodimer.

It is found in the cytoplasm. It carries out the reaction tRNA(Gly) + glycine + ATP = glycyl-tRNA(Gly) + AMP + diphosphate. Catalyzes the attachment of glycine to tRNA(Gly). The sequence is that of Glycine--tRNA ligase from Borreliella burgdorferi (strain ATCC 35210 / DSM 4680 / CIP 102532 / B31) (Borrelia burgdorferi).